Here is a 158-residue protein sequence, read N- to C-terminus: Molybdopterin synthase catalytic subunit (158 aa).

Substrate is bound by residues 107 to 108 (HR), lysine 123, and 130 to 132 (KKE).

It belongs to the MoaE family. MOCS2B subfamily. As to quaternary structure, heterotetramer; composed of 2 small (mocs2s) and 2 large (mocs2l) subunits.

Its subcellular location is the cytoplasm. It carries out the reaction 2 [molybdopterin-synthase sulfur-carrier protein]-C-terminal-Gly-aminoethanethioate + cyclic pyranopterin phosphate + H2O = molybdopterin + 2 [molybdopterin-synthase sulfur-carrier protein]-C-terminal Gly-Gly + 2 H(+). Its pathway is cofactor biosynthesis; molybdopterin biosynthesis. Its function is as follows. Catalytic subunit of the molybdopterin synthase complex, a complex that catalyzes the conversion of precursor Z into molybdopterin. Acts by mediating the incorporation of 2 sulfur atoms from thiocarboxylated mocs2s into precursor Z to generate a dithiolene group. The sequence is that of Molybdopterin synthase catalytic subunit (mocs2l) from Dictyostelium discoideum (Social amoeba).